Consider the following 70-residue polypeptide: Sec-independent protein translocase protein TatA (70 aa).

Residues 1–21 (MFGLGGQELILILLIILLLFG) form a helical membrane-spanning segment. The span at 50-62 (FNKVVDEPPRKTP) shows a compositional bias: basic and acidic residues. The tract at residues 50-70 (FNKVVDEPPRKTPENSTGSKS) is disordered.

It belongs to the TatA/E family. As to quaternary structure, forms a complex with TatC.

It localises to the cell inner membrane. Part of the twin-arginine translocation (Tat) system that transports large folded proteins containing a characteristic twin-arginine motif in their signal peptide across membranes. TatA could form the protein-conducting channel of the Tat system. This is Sec-independent protein translocase protein TatA from Chlorobium limicola (strain DSM 245 / NBRC 103803 / 6330).